The chain runs to 257 residues: Large ribosomal subunit protein uL2 (257 aa).

Residues 207 to 231 (VEHPFGGGNHQHIGKPSTIRRDAPA) form a disordered region.

Belongs to the universal ribosomal protein uL2 family. As to quaternary structure, component of the large ribosomal subunit.

The protein localises to the cytoplasm. Its function is as follows. Component of the large ribosomal subunit. The ribosome is a large ribonucleoprotein complex responsible for the synthesis of proteins in the cell. This chain is Large ribosomal subunit protein uL2 (rpl8), found in Xenopus laevis (African clawed frog).